A 1273-amino-acid polypeptide reads, in one-letter code: MPFDRQPLLSGEKGMPATSLWLVGGAVIAAVCVIVNTSYNGTQLSVTARPIQAAVSQVSMARFAESGVSRGSGNRVSQAVPLMAASVGAESESRRWVASAILFPLSGLFAAVALKMAMMKPKVAAVLPFTSEKDMKVWNPVNNKKFETFSYLPPLSDAQIAKQVDMIIAKGLSPCLEFAAPENSFIANDNTVRFSGTAAGYYDNRYWTMWKLPMFGCTDASQVLREISECRRAYPQCYVRLAAFDSVKQVQVISFVVQRPSGSSSSSWGMAAMTGEKDMKVWNPVNNKKFETFSYLPPLSDAQIAKQVDMIIAKGLSPCLEFAAPENSFIANDNTVRFSGTAAGYYDNRYWTMWKLPMFGCTDASQVLREISECRRAYPQCYVRLAAFDSVKQVQVISFVVQRPSGSSSSWGMAAMTGEKDMKVWNPVNNKKFETFSYLPPLSDAQIAKQVDMIIAKGLSPCLEFAAPENSFIANDNTVRFSGTAAGYYDNHYWTMWKLPMFGCTDASQVLREISECRRAYPQCYVRLAAFDSVKQVQVISFVVQRPSGSSSSSWGMAAMTGEKDMKVWNPVNNKKFETFSYLPPLSDAQIAKQVDMIIAKGLSPCLEFAAPENSFIANDNTVRFSGTAAGYYDNRYWTMWKLPMFGCTDASQVLREISECRRAYPQCYVRLAAFDSVKQVQVISFVVQRPSGSSSSWGMAAMTGEKDMKVWNPVNNKKFETFSYLPPLSDAQIAKQVDMIIAKGLSPCLEFAAPENSFIANDNTVRFSGTAAGYYDNRYWTMWKLPMFGCTDASQVLREISECRRAYPQCYVRLAAFDSVKQVQVISFVVQRPSGSSSSSSWGMAAMTGEKEMKVWNPVNNKKFETFSYLPPLSDAQIAKQVDMIIAKGLSPCLEFAAPENSFIANDNTVRFSGTAAGYYDNRYWTMWKLPMFGCTDASQVLREISECRRAYPQCYVRLAFDSVKQVQVISFVVQRPSGSSSSSWGMAAMTGEKDMKVWNPVNNKKFETFSYLPPLSDAQIAKQVDMIIAKGLSPCLEFAAPENSFIANDNTVRFSGTAAGYYDNRYWTMWKLPMFGCTDASQVLREISECRRAYPQCYVRLAAFDSVKQVQVISFVVQRPSGSSSSSWGMAAMTGEKEMKVWNPVNNKKFETFSYLPPLSDAQIAKQVDMIIAKGLSPCLEFAAPENSFIANDNTVRFSGTAAGYYDNRYWTMWKLPMFGCTDASQVLREISECRRAYPQCYVRLAAFDSVKQVQVISFVVQRPSSGGRSW.

The N-terminal 134 residues, methionine 1–aspartate 134, are a transit peptide targeting the chloroplast. 7 consecutive propeptides follow at residues glycine 269–aspartate 278, glycine 412–aspartate 421, glycine 556–aspartate 565, glycine 699–aspartate 708, glycine 844–glutamate 853, glycine 987–aspartate 996, and glycine 1131–glutamate 1140.

This sequence belongs to the RuBisCO small chain family. In terms of assembly, heterohexadecamer of 8 large and 8 small subunits. Post-translationally, eight small subunits are processed from a large polyprotein. All start with the same sequence but there is more heterogeneity at the C-terminus.

The protein resides in the plastid. It localises to the chloroplast. Functionally, ruBisCO catalyzes two reactions: the carboxylation of D-ribulose 1,5-bisphosphate, the primary event in carbon dioxide fixation, as well as the oxidative fragmentation of the pentose substrate. Both reactions occur simultaneously and in competition at the same active site. Although the small subunit is not catalytic it is essential for maximal activity. This is Ribulose bisphosphate carboxylase small subunit, chloroplastic from Euglena gracilis.